The chain runs to 422 residues: F-box/WD repeat-containing protein 2 (422 aa).

One can recognise an F-box domain in the interval 54-101; sequence RDFLKLLPLELSFYLLKWLDPQTLLTCCLVSKQWNKVISACTEVWQTA. WD repeat units follow at residues 146–183, 185–221, 224–265, and 276–314; these read GHSA…CVYG, QTHT…RTQH, GHTG…NTLT, and LQKC…NCKC. Lys298 carries the N6-acetyllysine modification.

Directly interacts with SKP1 and CUL1. Widely expressed during embryogenesis and in adult tissues.

Its function is as follows. Substrate-recognition component of the SCF (SKP1-CUL1-F-box protein)-type E3 ubiquitin ligase complex. The polypeptide is F-box/WD repeat-containing protein 2 (Fbxw2) (Mus musculus (Mouse)).